Reading from the N-terminus, the 430-residue chain is Phosphomethylpyrimidine synthase (430 aa).

Substrate contacts are provided by residues Asn-67, Met-96, Tyr-125, His-161, 183 to 185 (SRG), 224 to 227 (DALR), and Glu-263. Residue His-267 participates in Zn(2+) binding. Tyr-290 contributes to the substrate binding site. Residue His-331 coordinates Zn(2+). [4Fe-4S] cluster is bound by residues Cys-406, Cys-409, and Cys-413.

Belongs to the ThiC family. As to quaternary structure, homodimer. [4Fe-4S] cluster is required as a cofactor.

It carries out the reaction 5-amino-1-(5-phospho-beta-D-ribosyl)imidazole + S-adenosyl-L-methionine = 4-amino-2-methyl-5-(phosphooxymethyl)pyrimidine + CO + 5'-deoxyadenosine + formate + L-methionine + 3 H(+). It participates in cofactor biosynthesis; thiamine diphosphate biosynthesis. Functionally, catalyzes the synthesis of the hydroxymethylpyrimidine phosphate (HMP-P) moiety of thiamine from aminoimidazole ribotide (AIR) in a radical S-adenosyl-L-methionine (SAM)-dependent reaction. The chain is Phosphomethylpyrimidine synthase from Campylobacter jejuni subsp. jejuni serotype O:2 (strain ATCC 700819 / NCTC 11168).